The primary structure comprises 257 residues: Meiotically up-regulated gene 14 protein (257 aa).

It is found in the cytoplasm. It localises to the nucleus. Has a role in meiosis. This Schizosaccharomyces pombe (strain 972 / ATCC 24843) (Fission yeast) protein is Meiotically up-regulated gene 14 protein (mug14).